We begin with the raw amino-acid sequence, 412 residues long: [Pyruvate dehydrogenase (acetyl-transferring)] kinase isozyme 4, mitochondrial (412 aa).

The Histidine kinase domain maps to 138–368 (ILEYKDTCTV…DAIIYLKALS (231 aa)). Residues 254-261 (ELFKNAMR), D293, 312-313 (ST), and 329-334 (GFGYGL) contribute to the ATP site.

This sequence belongs to the PDK/BCKDK protein kinase family. In terms of assembly, homodimer. Interacts with the pyruvate dehydrogenase complex subunit DLAT, and is part of the multimeric pyruvate dehydrogenase complex that contains multiple copies of pyruvate dehydrogenase (E1), dihydrolipoamide acetyltransferase (DLAT, E2) and lipoamide dehydrogenase (DLD, E3). As to expression, detected in skeletal muscle and heart.

The protein resides in the mitochondrion matrix. The catalysed reaction is L-seryl-[pyruvate dehydrogenase E1 alpha subunit] + ATP = O-phospho-L-seryl-[pyruvate dehydrogenase E1 alpha subunit] + ADP + H(+). Functionally, kinase that plays a key role in regulation of glucose and fatty acid metabolism and homeostasis via phosphorylation of the pyruvate dehydrogenase subunits PDHA1 and PDHA2. This inhibits pyruvate dehydrogenase activity, and thereby regulates metabolite flux through the tricarboxylic acid cycle, down-regulates aerobic respiration and inhibits the formation of acetyl-coenzyme A from pyruvate. Inhibition of pyruvate dehydrogenase decreases glucose utilization and increases fat metabolism in response to prolonged fasting and starvation. Plays an important role in maintaining normal blood glucose levels under starvation, and is involved in the insulin signaling cascade. Via its regulation of pyruvate dehydrogenase activity, plays an important role in maintaining normal blood pH and in preventing the accumulation of ketone bodies under starvation. In the fed state, mediates cellular responses to glucose levels and to a high-fat diet. Regulates both fatty acid oxidation and de novo fatty acid biosynthesis. Plays a role in the generation of reactive oxygen species. Protects detached epithelial cells against anoikis. Plays a role in cell proliferation via its role in regulating carbohydrate and fatty acid metabolism. In Ictidomys tridecemlineatus (Thirteen-lined ground squirrel), this protein is [Pyruvate dehydrogenase (acetyl-transferring)] kinase isozyme 4, mitochondrial (PDK4).